The following is a 236-amino-acid chain: Uridylate kinase (236 aa).

Position 10 to 13 (10 to 13 (KLSG)) interacts with ATP. The tract at residues 18-23 (GEDGYG) is involved in allosteric activation by GTP. Glycine 52 provides a ligand contact to UMP. ATP is bound by residues glycine 53 and arginine 57. UMP contacts are provided by residues aspartate 72 and 133-140 (TGNPYFTT). Threonine 160, tyrosine 166, and aspartate 169 together coordinate ATP.

This sequence belongs to the UMP kinase family. As to quaternary structure, homohexamer.

The protein resides in the cytoplasm. The enzyme catalyses UMP + ATP = UDP + ADP. The protein operates within pyrimidine metabolism; CTP biosynthesis via de novo pathway; UDP from UMP (UMPK route): step 1/1. With respect to regulation, allosterically activated by GTP. Inhibited by UTP. Functionally, catalyzes the reversible phosphorylation of UMP to UDP. The protein is Uridylate kinase of Chlorobium phaeobacteroides (strain DSM 266 / SMG 266 / 2430).